The sequence spans 72 residues: SRY-related protein ADW2 (72 aa).

A DNA-binding region (HMG box) is located at residues 1–69; sequence VKRPMNAFMV…KHMADYADYK (69 aa).

It localises to the nucleus. In Alligator mississippiensis (American alligator), this protein is SRY-related protein ADW2.